The chain runs to 348 residues: MSTIEEQLKALREETLASLKQITAENEKEMQDLRVSVLGKKGSLTEILKGMKDVSAEMRPIIGKHVNEARDVLTAAFEETAKLLEEKKVAAQLASESIDVTLPGRPVAAGHRHVLTQTSEEIEDIFIGMGYQVVDGFEVEQDYYNFERMNLPKDHPARDMQDTFYITEEILLRTHTSPVQARAMDAHDFSKGPLKMISPGRVFRRDTDDATHSHQFHQIEGLVVGKNISMADLQGTLQLIVQKMFGEERQIRLRPSYFPFTEPSVEVDVSCFKCGGEGCNVCKKTGWIEIMGAGMVHPRVLEMSGIDATVYSGFAFGLGQERVAMLRYGINDIRGFYQGDVRFSEQFK.

Mg(2+) is bound at residue Glu-262.

It belongs to the class-II aminoacyl-tRNA synthetase family. Phe-tRNA synthetase alpha subunit type 1 subfamily. Tetramer of two alpha and two beta subunits. It depends on Mg(2+) as a cofactor.

The protein resides in the cytoplasm. The enzyme catalyses tRNA(Phe) + L-phenylalanine + ATP = L-phenylalanyl-tRNA(Phe) + AMP + diphosphate + H(+). This chain is Phenylalanine--tRNA ligase alpha subunit, found in Streptococcus pneumoniae (strain JJA).